The sequence spans 552 residues: CTP synthase (552 aa).

The segment at 1 to 270 is amidoligase domain; the sequence is MTKYVFVTGG…DRIICEELKL (270 aa). Position 13 (serine 13) interacts with CTP. Serine 13 is a binding site for UTP. ATP contacts are provided by residues 14–19 and aspartate 71; that span reads SLGKGI. Residues aspartate 71 and glutamate 144 each contribute to the Mg(2+) site. CTP is bound by residues 151-153, 191-196, and lysine 227; these read DIE and KTKPTQ. UTP-binding positions include 191–196 and lysine 227; that span reads KTKPTQ. Residues 295-547 enclose the Glutamine amidotransferase type-1 domain; sequence TIGMVGKYVD…VEAALANKQA (253 aa). Residue glycine 356 participates in L-glutamine binding. Catalysis depends on cysteine 383, which acts as the Nucleophile; for glutamine hydrolysis. L-glutamine contacts are provided by residues 384–387, glutamate 407, and arginine 473; that span reads LGMQ. Residues histidine 520 and glutamate 522 contribute to the active site.

It belongs to the CTP synthase family. Homotetramer.

It catalyses the reaction UTP + L-glutamine + ATP + H2O = CTP + L-glutamate + ADP + phosphate + 2 H(+). It carries out the reaction L-glutamine + H2O = L-glutamate + NH4(+). The catalysed reaction is UTP + NH4(+) + ATP = CTP + ADP + phosphate + 2 H(+). The protein operates within pyrimidine metabolism; CTP biosynthesis via de novo pathway; CTP from UDP: step 2/2. Its activity is regulated as follows. Allosterically activated by GTP, when glutamine is the substrate; GTP has no effect on the reaction when ammonia is the substrate. The allosteric effector GTP functions by stabilizing the protein conformation that binds the tetrahedral intermediate(s) formed during glutamine hydrolysis. Inhibited by the product CTP, via allosteric rather than competitive inhibition. In terms of biological role, catalyzes the ATP-dependent amination of UTP to CTP with either L-glutamine or ammonia as the source of nitrogen. Regulates intracellular CTP levels through interactions with the four ribonucleotide triphosphates. The protein is CTP synthase of Burkholderia ambifaria (strain MC40-6).